The primary structure comprises 201 residues: MDGLRQRFERFLEQKNVATEALGALEARTGVEKRYLAAGALALLGLYLLFGYGASLLCNVIGFVYPAYASVKAIESPSKEDDTVWLTYWVVYALFGLVEFFSDLLLFWFPFYYAGKCAFLLFCMTPGPWNGALLLYHRVIRPLFLKHHMALDSAASQLSGRALDLAAGITRDVLQALARGRALVTPASTSEPPAALELDPK.

The next 3 membrane-spanning stretches (helical) occupy residues 36–56 (LAAGALALLGLYLLFGYGASL), 89–109 (WVVYALFGLVEFFSDLLLFWF), and 117–137 (CAFLLFCMTPGPWNGALLLYH).

The protein belongs to the DP1 family. As to quaternary structure, interacts with STX3. Interacts with clathrin. Expressed in the inner segment of rod photoreceptors and outer plexiform layer of the retina (at protein level). Expressed in liver, but not detected in brain, muscle, kidney, retinal cone photoreceptors or retinal ganglion cells (at protein level). Highly expressed in the ganglion cell layer of the retina and in liver, and also detected at low levels in kidney and testis. Isoform 1: Expressed in the retina. Isoform 2: Expressed in liver.

It is found in the endoplasmic reticulum membrane. The protein resides in the cytoplasmic vesicle. It localises to the clathrin-coated vesicle membrane. Required for correct function and survival of retinal photoreceptors. Required for retinal development. In rod photoreceptors, facilitates stability and/or trafficking of guanylate cyclases and is required to maintain endoplasmic reticulum and mitochondrial homeostasis. May play a role in clathrin-coated intracellular vesicle trafficking of proteins from the endoplasmic reticulum to the retinal rod plasma membrane. The polypeptide is Receptor expression-enhancing protein 6 (Reep6) (Mus musculus (Mouse)).